The primary structure comprises 391 residues: RAB6A-GEF complex partner protein 2 (391 aa).

This sequence belongs to the RGP1 family. As to quaternary structure, forms a complex with RIC1; the interaction enhances RAB6A GTPase activity. Interacts with RIC1. Interacts with RAB6A; the interaction is direct with a preference for RAB6A-GDP. Interacts with RAB33B.

It is found in the cytoplasm. Its subcellular location is the cytosol. The protein localises to the membrane. Its function is as follows. The RIC1-RGP1 complex acts as a guanine nucleotide exchange factor (GEF), which activates RAB6A by exchanging bound GDP for free GTP and may thereby required for efficient fusion of endosome-derived vesicles with the Golgi compartment. The RIC1-RGP1 complex participates in the recycling of mannose-6-phosphate receptors. This is RAB6A-GEF complex partner protein 2 from Homo sapiens (Human).